We begin with the raw amino-acid sequence, 197 residues long: MASIQNLYETVVGVLGDQAGKVISALGEITVECLPEHYISVMTALHDHEDLHFELLVDLCGVDYSTYKNEAWQGKRFAVVSQLLSVKNNQRIRVRVWVSDDDFPVVESVADIYNSADWYEREAFDLYGIMFNNHPDLRRILTDYGFVGHPFRKDFPISGYVEMRYDEEQKRVIYQPVTIEPREITPRIVREENYGGQ.

It belongs to the complex I 30 kDa subunit family. As to quaternary structure, NDH-1 is composed of 14 different subunits. Subunits NuoB, C, D, E, F, and G constitute the peripheral sector of the complex.

The protein resides in the cell inner membrane. It carries out the reaction a quinone + NADH + 5 H(+)(in) = a quinol + NAD(+) + 4 H(+)(out). In terms of biological role, NDH-1 shuttles electrons from NADH, via FMN and iron-sulfur (Fe-S) centers, to quinones in the respiratory chain. The immediate electron acceptor for the enzyme in this species is believed to be ubiquinone. Couples the redox reaction to proton translocation (for every two electrons transferred, four hydrogen ions are translocated across the cytoplasmic membrane), and thus conserves the redox energy in a proton gradient. The sequence is that of NADH-quinone oxidoreductase subunit C from Neisseria gonorrhoeae (strain ATCC 700825 / FA 1090).